The sequence spans 184 residues: Photosystem I assembly protein Ycf4 (184 aa).

2 helical membrane-spanning segments follow: residues 22–42 and 57–77; these read FCWAIILFLGSLGFLLIGISS and ILFFPQGIVMSFYGLAGLFIS.

Belongs to the Ycf4 family.

The protein resides in the plastid. It is found in the chloroplast thylakoid membrane. Its function is as follows. Seems to be required for the assembly of the photosystem I complex. The chain is Photosystem I assembly protein Ycf4 from Populus trichocarpa (Western balsam poplar).